The following is a 1027-amino-acid chain: Exportin-T (1027 aa).

This sequence belongs to the exportin family.

It localises to the nucleus. The protein localises to the cytoplasm. Its function is as follows. tRNA nucleus export receptor which facilitates tRNA translocation across the nuclear pore complex. Involved in pre-tRNA splicing, probably by affecting the interaction of pre-tRNA with splicing endonuclease. The protein is Exportin-T (LOS1) of Pyricularia oryzae (strain 70-15 / ATCC MYA-4617 / FGSC 8958) (Rice blast fungus).